Consider the following 79-residue polypeptide: MARKPASSQDFETTLAKLENIVAHLENGDLPLEEALKEFEQGVQLAKLGQERLQQAEQRIQILLQKTEDAPLNDYKGNA.

This sequence belongs to the XseB family. In terms of assembly, heterooligomer composed of large and small subunits.

The protein resides in the cytoplasm. The catalysed reaction is Exonucleolytic cleavage in either 5'- to 3'- or 3'- to 5'-direction to yield nucleoside 5'-phosphates.. In terms of biological role, bidirectionally degrades single-stranded DNA into large acid-insoluble oligonucleotides, which are then degraded further into small acid-soluble oligonucleotides. This chain is Exodeoxyribonuclease 7 small subunit, found in Haemophilus influenzae (strain PittGG).